Consider the following 352-residue polypeptide: uncharacterized protein (352 aa).

Asn-14, Asn-52, and Asn-70 each carry an N-linked (GlcNAc...) asparagine glycan. The disordered stretch occupies residues 41-73 (LSDYKKNKDTLNNSNNNINQPFENSNNFNNNSK). The span at 50 to 72 (TLNNSNNNINQPFENSNNFNNNS) shows a compositional bias: low complexity. A helical membrane pass occupies residues 131-151 (IIFKSSGLLITLLVLYLGTFF). N-linked (GlcNAc...) asparagine glycosylation is found at Asn-165, Asn-186, Asn-192, Asn-193, Asn-203, and Asn-289. The span at 193–213 (NSSNSNNNNINNSNNNNNNNN) shows a compositional bias: low complexity. The disordered stretch occupies residues 193 to 219 (NSSNSNNNNINNSNNNNNNNNRILSPN).

Its subcellular location is the membrane. This is an uncharacterized protein from Dictyostelium discoideum (Social amoeba).